The chain runs to 237 residues: MTMADKRRRVLLKLSGEAFGGGQLGVNPDIVSGIAREIAQAATDVEIAIVVGGGNFFRGAELSQRGMDRGRADYMGMLGTVMNSLALQDFLEQAGAETRVQSAIEMIQVAEPYIPLRAERHLEKGRIVIFGAGAGLPYFSTDTVAAQRALEIIADVVLVAKNGVDGMYDDDPRTNPDARKIDQISHQEALKQNLKAVDSTALSLCMDNGMPMRIFGMEPAGNVTAALLGAEIGTLLG.

13-16 provides a ligand contact to ATP; it reads KLSG. Gly53 is a UMP binding site. ATP-binding residues include Gly54 and Arg58. UMP-binding positions include Asp73 and 134–141; that span reads AGLPYFST. ATP is bound by residues Asn162, Tyr168, and Asp171.

Belongs to the UMP kinase family. In terms of assembly, homohexamer.

It is found in the cytoplasm. It carries out the reaction UMP + ATP = UDP + ADP. Its pathway is pyrimidine metabolism; CTP biosynthesis via de novo pathway; UDP from UMP (UMPK route): step 1/1. Inhibited by UTP. In terms of biological role, catalyzes the reversible phosphorylation of UMP to UDP. In Leifsonia xyli subsp. xyli (strain CTCB07), this protein is Uridylate kinase.